A 20-amino-acid chain; its full sequence is Pregnancy-associated glycoprotein 71D (20 aa).

Residue Asn-4 is glycosylated (N-linked (GlcNAc...) asparagine).

Belongs to the peptidase A1 family. In terms of tissue distribution, chorionic epithelium (trophectoderm) and placental cotyledons.

Its subcellular location is the secreted. The protein resides in the extracellular space. The chain is Pregnancy-associated glycoprotein 71D from Bison bonasus (European bison).